We begin with the raw amino-acid sequence, 440 residues long: MYSSSVVSNPNERLVNNRVENDLESSDDTLSTQAKPVSRLLTRKLLLGVVVLFFLAGVSVVSYFLFSKYKMLNKFKRELDDHLTKDFPNLERSKRDTCFDELTRLFGDGFLSDDPKLEYEVYREFEEFNSKYNRRHATQQERLNRLVTFRSNYLEVKEQKGDEPYVKGINRFSDLTEREFYKLFPVMKPPKATYSNGYYLLSHMANKTYLKNLKKALNTDEDVDLAKLTGENLDWRRSSSVTSVKDQSNCGGCWAFSTVGSVEGYYMSHFDKSYELSVQELLDCDSFSNGCQGGLLESAYEYVRKYGLVSAKDLPFVDKARRCSVPKAKKVSVPSYHVFKGKEVMTRSLTSSPCSVYLSVSPELAKYKSGVFTGECGKSLNHAVVLVGEGYDEVTKKRYWVVQNSWGTDWGENGYMRLERTNMGTDKCGVLDTSMSAFEL.

Positions 1–60 (MYSSSVVSNPNERLVNNRVENDLESSDDTLSTQAKPVSRLLTRKLLLGVVVLFFLAGVSV) are cleaved as a signal peptide. Residues 61–229 (VSYFLFSKYK…DEDVDLAKLT (169 aa)) constitute a propeptide, activation peptide. The interval 166 to 182 (VKGINRFSDLTEREFYK) is involved in processing to yield active enzymes. Asn-206 is a glycosylation site (N-linked (GlcNAc...) asparagine). Cys-250 and Cys-291 are joined by a disulfide. Active-site residues include Cys-253, His-382, and Asn-404.

This sequence belongs to the peptidase C1 family.

The chain is Cysteine proteinase from Theileria parva (East coast fever infection agent).